The following is a 350-amino-acid chain: Flap endonuclease 1 (350 aa).

Positions 1–102 (MGVTALRELI…REIERRQKLK (102 aa)) are N-domain. Mg(2+) contacts are provided by D31, D84, E156, E158, D177, D179, and D240. The tract at residues 120-261 (EARKYAQMSA…TALRYVKSYG (142 aa)) is I-domain. The interval 339 to 347 (KQSTLDMFF) is interaction with PCNA.

Belongs to the XPG/RAD2 endonuclease family. FEN1 subfamily. As to quaternary structure, interacts with PCNA. PCNA stimulates the nuclease activity without altering cleavage specificity. It depends on Mg(2+) as a cofactor.

Structure-specific nuclease with 5'-flap endonuclease and 5'-3' exonuclease activities involved in DNA replication and repair. During DNA replication, cleaves the 5'-overhanging flap structure that is generated by displacement synthesis when DNA polymerase encounters the 5'-end of a downstream Okazaki fragment. Binds the unpaired 3'-DNA end and kinks the DNA to facilitate 5' cleavage specificity. Cleaves one nucleotide into the double-stranded DNA from the junction in flap DNA, leaving a nick for ligation. Also involved in the base excision repair (BER) pathway. Acts as a genome stabilization factor that prevents flaps from equilibrating into structures that lead to duplications and deletions. Also possesses 5'-3' exonuclease activity on nicked or gapped double-stranded DNA. The chain is Flap endonuclease 1 from Ignicoccus hospitalis (strain KIN4/I / DSM 18386 / JCM 14125).